We begin with the raw amino-acid sequence, 392 residues long: MIGPSSQISKILLTLLFLLIIFYVFMDVELYLRIHNYAIERNYHTNVSLPASVVGPSTSESGSGSIGGSSSSSSSSSSSTSTKLPTAGDRQPSYEDHTWISCDINPLCHVTVKAILLDHTNHYLFAPLATMFDNVIGFSRSTFITPNMISFFHVGVACLAGKLVASDSLGYRRLGVLLFQIRTFLDDLDGHVARVRKHIRGERSEIGTSGYYVDGLCDGLGCIALLLGIFFYLKNNPPRRGYSIIPMSDSKLPEPTMMIPKMKATTRKVAKNVISFTGQLLLSSTAWNRYIAVYQNMLEREDVSGNQSHCQDYVFKSTWFFCVAWMWRIVNVHALLHCVLLSIFCDKLWDFLRAIRYSGYIILLVAICLTEMHILEAQNYIFNSTACSNISL.

Residues 1 to 10 (MIGPSSQISK) are Lumenal-facing. Residues 11–31 (ILLTLLFLLIIFYVFMDVELY) form a helical membrane-spanning segment. The Cytoplasmic segment spans residues 32–140 (LRIHNYAIER…MFDNVIGFSR (109 aa)). The segment covering 59–82 (SESGSGSIGGSSSSSSSSSSSTST) has biased composition (low complexity). The segment at 59-91 (SESGSGSIGGSSSSSSSSSSSTSTKLPTAGDRQ) is disordered. Residues 141–161 (STFITPNMISFFHVGVACLAG) form a helical membrane-spanning segment. Over 162 to 212 (KLVASDSLGYRRLGVLLFQIRTFLDDLDGHVARVRKHIRGERSEIGTSGYY) the chain is Lumenal. A helical transmembrane segment spans residues 213–233 (VDGLCDGLGCIALLLGIFFYL). Topologically, residues 234–271 (KNNPPRRGYSIIPMSDSKLPEPTMMIPKMKATTRKVAK) are cytoplasmic. The helical transmembrane segment at 272–288 (NVISFTGQLLLSSTAWN) threads the bilayer. At 289–319 (RYIAVYQNMLEREDVSGNQSHCQDYVFKSTW) the chain is on the lumenal side. Residues 320–340 (FFCVAWMWRIVNVHALLHCVL) form a helical membrane-spanning segment. Over 341–356 (LSIFCDKLWDFLRAIR) the chain is Cytoplasmic. A helical transmembrane segment spans residues 357–377 (YSGYIILLVAICLTEMHILEA). The Lumenal portion of the chain corresponds to 378–392 (QNYIFNSTACSNISL).

The protein belongs to the CDP-alcohol phosphatidyltransferase class-I family. It depends on Mn(2+) as a cofactor.

The protein resides in the membrane. Its subcellular location is the golgi apparatus membrane. The protein localises to the cell membrane. The catalysed reaction is CDP-ethanolamine + an N-acylsphing-4-enine = an N-acylsphing-4-enine 1-phosphoethanolamine + CMP + H(+). It carries out the reaction CDP-ethanolamine + an N-acyl-sphingoid base = an N-acyl-sphingoid 1-phosphoethanolamine + CMP + H(+). Its function is as follows. Catalyzes the biosynthesis of ceramide phosphoethanolamine (CPE) through the transfer of a phosphatidyl head group from cytidine 5'-diphosphate (CDP)-ethanolamine on to the primary hydroxyl of ceramide. In Drosophila melanogaster (Fruit fly), this protein is Ceramide phosphoethanolamine synthase.